Here is a 356-residue protein sequence, read N- to C-terminus: uncharacterized protein (356 aa).

Helical transmembrane passes span 7–29 (LLSRFLGIFLNVSFVSVLLVSLY), 49–71 (YFLNILPLGFYYISFITLSISLI), 91–113 (ISPLRFSLPVLLFSVFLSSTFLL), 270–292 (LFYRVMFSLSPVFISIFSLYLFF), 299–316 (QVIPRFLVFIVILWLVIL), and 329–348 (VLYSLIPIFLLILYSLKGVY).

The protein localises to the cell membrane. This is an uncharacterized protein from Aquifex aeolicus (strain VF5).